We begin with the raw amino-acid sequence, 326 residues long: UDP-N-acetylglucosamine transporter (326 aa).

The next 8 helical transmembrane spans lie at 4 to 24, 38 to 58, 136 to 156, 174 to 194, 212 to 232, 243 to 263, 269 to 289, and 293 to 313; these read NLKY…VLTM, LSST…IFLV, LGMY…FVQW, FVGL…GVYF, LGFF…GELV, QLTW…AAVI, ILKG…SYFW, and FVPT…TFLY.

Belongs to the nucleotide-sugar transporter family. SLC35A subfamily. In terms of assembly, interacts with SLC35A2; the interaction is reduced in the presence of SLC35A4. Found in a complex with SLC35A2 and SLC35A4. Interacts with MGAT4B. O-Glcnacylation regulates the stability of SLC35A3 and the specific complex formation with MGAT4B.

It is found in the golgi apparatus membrane. The enzyme catalyses UMP(out) + UDP-N-acetyl-alpha-D-glucosamine(in) = UMP(in) + UDP-N-acetyl-alpha-D-glucosamine(out). In terms of biological role, transports diphosphate-N-acetylglucosamine (UDP-GlcNAc) from the cytosol into the lumen of the Golgi apparatus, functioning as an antiporter that exchanges UDP-N-acetyl-alpha-D-glucosamine for UMP. May supply UDP-GlcNAc as substrate for Golgi-resident glycosyltransferases that generate highly branched, multiantennary complex N-glycans and keratan sulfate. However, the exact role of SLC35A3 still needs to be elucidated, it could be a member of a catalytically more efficient multiprotein complex rather than function independently as a single transporter. The polypeptide is UDP-N-acetylglucosamine transporter (Slc35a3) (Rattus norvegicus (Rat)).